Reading from the N-terminus, the 353-residue chain is D-alanine--D-alanine ligase (353 aa).

An ATP-grasp domain is found at 141-349 (KAAFAAAGLP…LEELVSQLVI (209 aa)). 176–231 (EAKLKYPCFVKPANLGSSVGISKAQNRNELLIGLDKAASLDRRIVVEQGVSARELE) serves as a coordination point for ATP. 3 residues coordinate Mg(2+): Asp-302, Glu-316, and Asn-318.

The protein belongs to the D-alanine--D-alanine ligase family. The cofactor is Mg(2+). It depends on Mn(2+) as a cofactor.

It is found in the cytoplasm. It catalyses the reaction 2 D-alanine + ATP = D-alanyl-D-alanine + ADP + phosphate + H(+). It functions in the pathway cell wall biogenesis; peptidoglycan biosynthesis. Cell wall formation. This is D-alanine--D-alanine ligase from Prochlorococcus marinus (strain MIT 9303).